The chain runs to 1028 residues: Unconventional myosin-Ic-A (1028 aa).

M1 bears the N-acetylmethionine mark. In terms of domain architecture, Myosin motor spans 12 to 696 (GVQDFVLLEN…TLFATEDALE (685 aa)). Residue 105 to 112 (GESGSGKT) participates in ATP binding. Position 348 is an N6-methyllysine (K348). The actin-binding stretch occupies residues 573 to 595 (LSKLMEILMSKEPSYVRCIKPND). IQ domains lie at 699–728 (KQGI…SAIN) and 722–751 (MKHS…AVDV). Residues 850–1024 (KDNYPQSVPR…NGHLSVVAPR (175 aa)) form the TH1 domain.

It belongs to the TRAFAC class myosin-kinesin ATPase superfamily. Myosin family. As to quaternary structure, interacts (via its IQ motifs) with calmodulin.

The protein resides in the cytoplasm. It localises to the cell membrane. Its subcellular location is the cell projection. It is found in the stereocilium membrane. Myosins are actin-based motor molecules with ATPase activity. Unconventional myosins serve in intracellular movements. Their highly divergent tails are presumed to bind to membranous compartments, which would be moved relative to actin filaments. Involved in egg activation by coupling dynamic actin to membrane. The protein is Unconventional myosin-Ic-A (myo1c-a) of Xenopus laevis (African clawed frog).